The sequence spans 671 residues: Archaeal Rqc2 homolog aRqcH (671 aa).

Coiled coils occupy residues 291–363 (KVVV…ARIK) and 410–465 (RKNA…MQMK).

This sequence belongs to the NEMF family. In terms of assembly, associates with stalled 50S ribosomal subunits.

Functionally, probably part of the ribosome quality control system (RQC). May mediate the addition of alanine residues (Ala tailing) to incompletely synthesized nascent chains from stalled ribosomes, leading to their degradation. This chain is Archaeal Rqc2 homolog aRqcH, found in Methanocaldococcus jannaschii (strain ATCC 43067 / DSM 2661 / JAL-1 / JCM 10045 / NBRC 100440) (Methanococcus jannaschii).